A 212-amino-acid polypeptide reads, in one-letter code: uncharacterized protein (212 aa).

The signal sequence occupies residues 1 to 18 (MIPLVALLVLLTLQASPG). The helical transmembrane segment at 186–208 (IYRLATFFMVSLFVGSFVALVFV) threads the bilayer.

It to A.fulgidus AF_0540.

The protein localises to the membrane. This is an uncharacterized protein from Archaeoglobus fulgidus (strain ATCC 49558 / DSM 4304 / JCM 9628 / NBRC 100126 / VC-16).